The primary structure comprises 545 residues: Probable acyl-activating enzyme 4 (545 aa).

Belongs to the ATP-dependent AMP-binding enzyme family. In terms of tissue distribution, expressed in roots, leaves, stems, flowers and developing seeds.

In terms of biological role, may act as an acid--thiol ligase that activates carboxylic acids by forming acyl-CoAs. The polypeptide is Probable acyl-activating enzyme 4 (AEE4) (Arabidopsis thaliana (Mouse-ear cress)).